Reading from the N-terminus, the 140-residue chain is MHRGVGPAFRVVRKMAASGAEPQVLVQYLVLRKDLSQAPFSWPAGALVAQACHAATAALHTHRDHPHTAAYLQELGRMRKVVLEAPDETTLKELAETLQQKNIDHMLWLEQPENIATCIALRPYPKEEVGQYLKKFRLFK.

It belongs to the PTH2 family. PTRHD1 subfamily.

The catalysed reaction is an N-acyl-L-alpha-aminoacyl-tRNA + H2O = an N-acyl-L-amino acid + a tRNA + H(+). In terms of biological role, as a putative peptidyl-tRNA hydrolase, it might be involved in releasing tRNAs from the ribosome during protein synthesis. Some evidence, however, suggests that it lacks peptidyl-tRNA hydrolase activity. This is Putative peptidyl-tRNA hydrolase PTRHD1 (PTRHD1) from Homo sapiens (Human).